The primary structure comprises 87 residues: UPF0248 protein TON_0940 (87 aa).

It belongs to the UPF0248 family.

This chain is UPF0248 protein TON_0940, found in Thermococcus onnurineus (strain NA1).